The following is a 320-amino-acid chain: Aspartate carbamoyltransferase catalytic subunit (320 aa).

Carbamoyl phosphate-binding residues include R68 and T69. K96 serves as a coordination point for L-aspartate. 3 residues coordinate carbamoyl phosphate: R118, H148, and Q151. The L-aspartate site is built by R181 and R236. 2 residues coordinate carbamoyl phosphate: G277 and P278.

Belongs to the aspartate/ornithine carbamoyltransferase superfamily. ATCase family. As to quaternary structure, heterododecamer (2C3:3R2) of six catalytic PyrB chains organized as two trimers (C3), and six regulatory PyrI chains organized as three dimers (R2).

It catalyses the reaction carbamoyl phosphate + L-aspartate = N-carbamoyl-L-aspartate + phosphate + H(+). It functions in the pathway pyrimidine metabolism; UMP biosynthesis via de novo pathway; (S)-dihydroorotate from bicarbonate: step 2/3. Its function is as follows. Catalyzes the condensation of carbamoyl phosphate and aspartate to form carbamoyl aspartate and inorganic phosphate, the committed step in the de novo pyrimidine nucleotide biosynthesis pathway. The protein is Aspartate carbamoyltransferase catalytic subunit of Paracidovorax citrulli (strain AAC00-1) (Acidovorax citrulli).